A 274-amino-acid polypeptide reads, in one-letter code: Shikimate dehydrogenase (NADP(+)) (274 aa).

Residues 20 to 22 and T68 contribute to the shikimate site; that span reads SKS. Residue K72 is the Proton acceptor of the active site. Position 84 (D84) interacts with NADP(+). The shikimate site is built by N93 and D109. Residues 131–135 and L217 each bind NADP(+); that span reads GAGGA. Y219 serves as a coordination point for shikimate. An NADP(+)-binding site is contributed by G240.

This sequence belongs to the shikimate dehydrogenase family. Homodimer.

It catalyses the reaction shikimate + NADP(+) = 3-dehydroshikimate + NADPH + H(+). It participates in metabolic intermediate biosynthesis; chorismate biosynthesis; chorismate from D-erythrose 4-phosphate and phosphoenolpyruvate: step 4/7. Its function is as follows. Involved in the biosynthesis of the chorismate, which leads to the biosynthesis of aromatic amino acids. Catalyzes the reversible NADPH linked reduction of 3-dehydroshikimate (DHSA) to yield shikimate (SA). The polypeptide is Shikimate dehydrogenase (NADP(+)) (Sphingopyxis alaskensis (strain DSM 13593 / LMG 18877 / RB2256) (Sphingomonas alaskensis)).